The chain runs to 218 residues: Sulfite reductase, assimilatory-type (218 aa).

[4Fe-4S] cluster is bound by residues cysteine 91, cysteine 97, cysteine 131, and cysteine 135. A siroheme-binding site is contributed by cysteine 135.

Functionally, this enzyme catalyzes the 6-electron reduction of sulfite to sulfide. This is one of several activities required for the biosynthesis of L-cysteine from sulfate. This is Sulfite reductase, assimilatory-type from Nitratidesulfovibrio vulgaris (strain ATCC 29579 / DSM 644 / CCUG 34227 / NCIMB 8303 / VKM B-1760 / Hildenborough) (Desulfovibrio vulgaris).